The primary structure comprises 833 residues: Ribosome biogenesis protein BOP1 homolog (833 aa).

The segment at 20 to 202 is disordered; sequence NKKSEPIAVS…DSDDSSEDES (183 aa). Residues 36 to 56 are compositionally biased toward low complexity; the sequence is SKPTTTATTTVSKSPVSTITT. Composition is skewed to acidic residues over residues 90-111 and 136-150; these read SEDDEDYESEEDDEGDDEEDVE and EAEESLVEYQSEDDS. The segment covering 154–170 has biased composition (low complexity); it reads SSKSSSSTTTTTTTTKK. The span at 182-192 shows a compositional bias: polar residues; the sequence is KQWTNDPNQFY. Residues 193-202 are compositionally biased toward acidic residues; it reads DSDDSSEDES. 3 WD repeats span residues 331 to 370, 488 to 527, and 529 to 569; these read TKAIRMGWIKLNKKGKKGEKDKKDGNFDLWADEGEEKEKT, GHKARVRSISISPNGQWLASGSDDCTIKIWEVSSTRCLYS, and EVES…TQTE. Residues 568–592 are disordered; sequence TEHSPETEKILTKPPTDSSTEQQQN. Over residues 582 to 592 the composition is skewed to polar residues; the sequence is PTDSSTEQQQN. WD repeat units follow at residues 618 to 660, 663 to 701, 704 to 743, 747 to 786, and 802 to 833; these read HHPF…TQSP, KSKTPNQVTRFHPNKPIFFVADQNIIRVYDLMKQELIKK, TGCRYISSIDIHPQGDNVIMGGYDKKVCWFDLDLSVRPYK, YHKMAVRKVIYHPTLPLFASCSDDLSIHVFHGMVYDDLLQ, and INDLGVLDIVFHPKQPWIFSSGADSTIRLYTN.

The protein belongs to the WD repeat BOP1/ERB1 family.

It localises to the nucleus. The protein resides in the nucleolus. It is found in the nucleoplasm. Functionally, required for maturation of ribosomal RNAs and formation of the large ribosomal subunit. This is Ribosome biogenesis protein BOP1 homolog from Dictyostelium discoideum (Social amoeba).